The chain runs to 329 residues: ADP-L-glycero-D-manno-heptose-6-epimerase (329 aa).

Residues 10–11, 31–32, K38, K53, 74–78, and N91 each bind NADP(+); these read FI, DD, and QGACS. The Proton acceptor role is filled by Y138. K142 is an NADP(+) binding site. N167 is a binding site for substrate. NADP(+) contacts are provided by V168 and K176. K176 serves as the catalytic Proton acceptor. Substrate contacts are provided by residues R178, H185, 199–202, R212, and Y291; that span reads FAGW.

This sequence belongs to the NAD(P)-dependent epimerase/dehydratase family. HldD subfamily. As to quaternary structure, homopentamer. NADP(+) is required as a cofactor.

It carries out the reaction ADP-D-glycero-beta-D-manno-heptose = ADP-L-glycero-beta-D-manno-heptose. The protein operates within nucleotide-sugar biosynthesis; ADP-L-glycero-beta-D-manno-heptose biosynthesis; ADP-L-glycero-beta-D-manno-heptose from D-glycero-beta-D-manno-heptose 7-phosphate: step 4/4. Its pathway is bacterial outer membrane biogenesis; LPS core biosynthesis. In terms of biological role, catalyzes the interconversion between ADP-D-glycero-beta-D-manno-heptose and ADP-L-glycero-beta-D-manno-heptose via an epimerization at carbon 6 of the heptose. This is ADP-L-glycero-D-manno-heptose-6-epimerase from Bordetella parapertussis (strain 12822 / ATCC BAA-587 / NCTC 13253).